A 216-amino-acid polypeptide reads, in one-letter code: Probable GTP-binding protein EngB (216 aa).

The EngB-type G domain maps to 30–204 (SGLEVAFAGR…QMVLAGWLDL (175 aa)). GTP-binding positions include 38 to 45 (GRSNAGKS), 64 to 68 (GRTQL), 82 to 85 (DLPG), 149 to 152 (TKAD), and 182 to 185 (LFSA). 2 residues coordinate Mg(2+): Ser45 and Thr66.

It belongs to the TRAFAC class TrmE-Era-EngA-EngB-Septin-like GTPase superfamily. EngB GTPase family. The cofactor is Mg(2+).

Functionally, necessary for normal cell division and for the maintenance of normal septation. This Ectopseudomonas mendocina (strain ymp) (Pseudomonas mendocina) protein is Probable GTP-binding protein EngB.